Consider the following 502-residue polypeptide: Cytochrome P450 monooxygenase verC (502 aa).

A helical membrane pass occupies residues 9 to 29 (IAALPMVSLLGAALIVVSVLG). N-linked (GlcNAc...) asparagine glycans are attached at residues N124, N190, N271, and N342. C444 serves as a coordination point for heme.

It belongs to the cytochrome P450 family. Requires heme as cofactor.

The protein localises to the membrane. It functions in the pathway mycotoxin biosynthesis. Functionally, cytochrome P450 monooxygenase; part of the gene cluster that mediates the biosynthesis of 11'-deoxyverticillin A, one of the dimeric epipolythiodioxopiperazines (ETPs) from the verticillin family that act as mycotoxins. 11'-deoxyverticillin A is required for normal conidiation. The nonribosomal peptide synthetase verP is speculated to be responsible for condensation of amino acids to form the carbon skeleton of verticillin, whereas the cluster-specific tailoring enzymes are involved in further modifications leading to the production of 11'-deoxyverticillin A. This is Cytochrome P450 monooxygenase verC from Clonostachys rogersoniana.